We begin with the raw amino-acid sequence, 75 residues long: SDASEPAPACVVMYESWRYTTAANNCADTVSVSVAYQDGATGPCATLPPGAVTTVGEGYLGEHGHPDHLALCPSS.

Intrachain disulfides connect C10–C26 and C44–C72.

In terms of biological role, inhibits mammalian alpha-amylases specifically but has no action on plant and microbial alpha-amylases. The sequence is that of Alpha-amylase inhibitor Paim-2 from Streptomyces olivaceoviridis (Streptomyces corchorusii).